The following is a 317-amino-acid chain: Protease HtpX homolog (317 aa).

The next 2 helical transmembrane spans lie at 6-26 (TAIL…AIGG) and 28-48 (GGMM…YWNS). A Zn(2+)-binding site is contributed by His-130. The active site involves Glu-131. His-134 contacts Zn(2+). 2 helical membrane passes run 145–165 (MTAT…LFGG) and 173–193 (PFGA…AMLV). Glu-202 contributes to the Zn(2+) binding site. The interval 283–317 (GGGGFAPGPAPAVRPPGGNPWGVDPGGGQRRGPWG) is disordered. The span at 290-300 (GPAPAVRPPGG) shows a compositional bias: pro residues. The span at 306–317 (DPGGGQRRGPWG) shows a compositional bias: gly residues.

Belongs to the peptidase M48B family. It depends on Zn(2+) as a cofactor.

The protein localises to the cell inner membrane. The protein is Protease HtpX homolog of Xanthobacter autotrophicus (strain ATCC BAA-1158 / Py2).